The primary structure comprises 116 residues: Nitrogen regulatory PII-like protein (116 aa).

It belongs to the P(II) protein family. Needs to interact with NrgA in order to localize correctly to the membrane.

The protein localises to the cell membrane. Its function is as follows. Required for full induction of the nrgAB operon under conditions of ammonium limitation. This chain is Nitrogen regulatory PII-like protein (nrgB), found in Bacillus subtilis (strain 168).